The chain runs to 1116 residues: Cation channel sperm-associated auxiliary subunit beta (1116 aa).

Over 1 to 1053 (MESPLIYVSV…QIYVDEAPLP (1053 aa)) the chain is Extracellular. C35 and C60 form a disulfide bridge. Residues N90, N100, N118, N226, and N321 are each glycosylated (N-linked (GlcNAc...) asparagine). A disulfide bond links C189 and C302. Cysteines 330 and 343 form a disulfide. 2 N-linked (GlcNAc...) asparagine glycosylation sites follow: N618 and N690. 4 disulfides stabilise this stretch: C718–C816, C829–C1037, C911–C920, and C922–C937. N-linked (GlcNAc...) asparagine glycosylation is found at N913 and N921. N1010 and N1015 each carry an N-linked (GlcNAc...) asparagine glycan. Residues 1054–1076 (FPGHTLIAVATAVVLGGLIFIAF) traverse the membrane as a helical segment. The Cytoplasmic portion of the chain corresponds to 1077-1116 (MFQLQGIHPWRTFQRWIRRNQEKFSSISLSELIHRSKSEE).

Component of the CatSper complex or CatSpermasome composed of the core pore-forming members CATSPER1, CATSPER2, CATSPER3 and CATSPER4 as well as auxiliary members CATSPERB, CATSPERG, CATSPERD, CATSPERE, CATSPERZ, C2CD6/CATSPERT, TMEM249, TMEM262 and EFCAB9. HSPA1 may be an additional auxiliary complex member. The core complex members CATSPER1, CATSPER2, CATSPER3 and CATSPER4 form a heterotetrameric channel. The auxiliary CATSPERB, CATSPERG, CATSPERD and CATSPERE subunits form a pavilion-like structure over the pore which stabilizes the complex through interactions with CATSPER4, CATSPER3, CATSPER1 and CATSPER2 respectively. TMEM262/CATSPERH interacts with CATSPERB, further stabilizing the complex. C2CD6/CATSPERT interacts at least with CATSPERD and is required for targeting the CatSper complex in the flagellar membrane.

Its subcellular location is the cell projection. The protein localises to the cilium. It localises to the flagellum membrane. Its function is as follows. Auxiliary component of the CatSper complex, a complex involved in sperm cell hyperactivation. Sperm cell hyperactivation is needed for sperm motility which is essential late in the preparation of sperm for fertilization. The sequence is that of Cation channel sperm-associated auxiliary subunit beta from Homo sapiens (Human).